A 144-amino-acid chain; its full sequence is Maximins 3/H11 type 2 (144 aa).

An N-terminal signal peptide occupies residues M1–A18. 2 propeptides span residues R19–R43 and R73–K122. I143 carries the post-translational modification Isoleucine amide.

Belongs to the bombinin family. In terms of tissue distribution, expressed by the skin glands.

The protein localises to the secreted. In terms of biological role, maximin-3 shows antibacterial activity against both Gram-positive and Gram-negative bacteria. It also shows antimicrobial activity against the fungus C.albicans, but not against A.flavus nor P.uticale. It has little hemolytic activity. It possess a significant cytotoxicity against tumor cell lines. It possess a significant anti-HIV activity. It shows high spermicidal activity. Maximin-H11 shows antimicrobial activity against bacteria and against the fungus C.albicans. Shows strong hemolytic activity. The polypeptide is Maximins 3/H11 type 2 (Bombina maxima (Giant fire-bellied toad)).